Consider the following 305-residue polypeptide: Serine/threonine-protein kinase 16 (305 aa).

G2 is lipidated: N-myristoyl glycine. 2 S-palmitoyl cysteine lipidation sites follow: C6 and C8. Positions 20-293 (YLFVQKLGEG…PVLLSQLEAL (274 aa)) constitute a Protein kinase domain. ATP-binding positions include 26–34 (LGEGGFSYV) and K49. D148 (proton acceptor) is an active-site residue. The segment at 166 to 202 (DLGSMNQACIQVEGSRQALALQDWAAQRCTISYRAPE) is activation loop. Position 197 is a phosphoserine; by autocatalysis (S197). Y198 carries the phosphotyrosine; by autocatalysis modification.

It belongs to the protein kinase superfamily. Ser/Thr protein kinase family. In terms of assembly, monomer. Interacts with DRG1 (via its N-terminal); the interaction phosphorylates DRG1. Post-translationally, mainly autophosphorylated on serine/threonine residues. Also autophosphorylated on Tyr-198. In terms of tissue distribution, expressed in heart, liver, brain, spleen, lung, skeletal muscle, kidney and testis.

It is found in the cytoplasm. Its subcellular location is the perinuclear region. The protein localises to the membrane. The catalysed reaction is L-seryl-[protein] + ATP = O-phospho-L-seryl-[protein] + ADP + H(+). The enzyme catalyses L-threonyl-[protein] + ATP = O-phospho-L-threonyl-[protein] + ADP + H(+). It catalyses the reaction L-tyrosyl-[protein] + ATP = O-phospho-L-tyrosyl-[protein] + ADP + H(+). Its function is as follows. Membrane-associated protein kinase that phosphorylates on serine and threonine residues. In vitro substrates include DRG1, ENO1 and EIF4EBP1. Also autophosphorylates. May be involved in secretory vesicle trafficking or intracellular signaling. May have a role in regulating stromal-epithelial interactions that occur during ductal morphogenesis in the mammary gland. May be involved in TGF-beta signaling. Able to autophosphorylate on Tyr residue; it is however unclear whether it has tyrosine-protein kinase toward other proteins. This Rattus norvegicus (Rat) protein is Serine/threonine-protein kinase 16 (Stk16).